A 505-amino-acid polypeptide reads, in one-letter code: Flagellin (505 aa).

It belongs to the bacterial flagellin family.

It is found in the secreted. The protein localises to the bacterial flagellum. Its function is as follows. Flagellin is the subunit protein which polymerizes to form the filaments of bacterial flagella. The polypeptide is Flagellin (fliC) (Salmonella senftenberg).